We begin with the raw amino-acid sequence, 376 residues long: MRIDFHASPEPTLGVEWEFALVDRRTRDLRNDATHLFARAKPRLPDPDKLHKELLRNTVEVVSGVCHTVGEAMADLRRTLEVVVPAGDDLDLDLYGGGTHPFASWTVQQLSEGHRYEELINRTQWWGRQMLIWGVHVHVGMPERDRVMAVLSSLLNFHPHLQALSASSPIWSGIDTGYASNRALMFQQLPTAGLPFQFERWSEFEAFVGDELVTGVIEELSEVRWDVRPAPRIGTLENRICDGVPDLADLSSLVALMHCLVVDLDTRAAAGETLPTMPPWHVQENKWRAARYGLDAIVITDAESNERLVTEDLADHLERLAPVADRLGCSEELAQVAQIPVRGASYQRQRAVAERTGGDLVAVVDSVVRELRAGLG.

This sequence belongs to the glutamate--cysteine ligase type 2 family. YbdK subfamily.

It carries out the reaction L-cysteine + L-glutamate + ATP = gamma-L-glutamyl-L-cysteine + ADP + phosphate + H(+). In terms of biological role, ATP-dependent carboxylate-amine ligase which exhibits weak glutamate--cysteine ligase activity. The polypeptide is Putative glutamate--cysteine ligase 2-3 (Nocardioides sp. (strain ATCC BAA-499 / JS614)).